We begin with the raw amino-acid sequence, 355 residues long: F-box only protein 32 (355 aa).

A Nuclear localization signal motif is present at residues 62–67 (KKRKKD). Residues 169-173 (LLQTL) carry the Nuclear export signal motif. The F-box domain maps to 223–271 (LTFTDLPLCLQLNIMQRLSDGRDLVSLGQVAPDLHVLSEDRLLWKKLCQ). The Bipartite nuclear localization signal motif lies at 280–295 (RKRLILSDKGQLDWKK).

In terms of assembly, part of the SCF (SKP1-CUL1-F-box) E3 ubiquitin-protein ligase complex SCF(FBXO32) formed of CUL1, SKP1, RBX1 and FBXO32.

The protein localises to the cytoplasm. It localises to the nucleus. Its pathway is protein modification; protein ubiquitination. Substrate recognition component of a SCF (SKP1-CUL1-F-box protein) E3 ubiquitin-protein ligase complex which mediates the ubiquitination and subsequent proteasomal degradation of target proteins. Probably recognizes and binds to phosphorylated target proteins during skeletal muscle atrophy. Recognizes TERF1. The sequence is that of F-box only protein 32 (FBXO32) from Sus scrofa (Pig).